A 282-amino-acid polypeptide reads, in one-letter code: Bis(5'-nucleosyl)-tetraphosphatase, symmetrical (282 aa).

This sequence belongs to the Ap4A hydrolase family.

It carries out the reaction P(1),P(4)-bis(5'-adenosyl) tetraphosphate + H2O = 2 ADP + 2 H(+). Its function is as follows. Hydrolyzes diadenosine 5',5'''-P1,P4-tetraphosphate to yield ADP. The protein is Bis(5'-nucleosyl)-tetraphosphatase, symmetrical of Salmonella paratyphi A (strain ATCC 9150 / SARB42).